The sequence spans 342 residues: Phosphate acyltransferase (342 aa).

Belongs to the PlsX family. As to quaternary structure, homodimer. Probably interacts with PlsY.

Its subcellular location is the cytoplasm. The enzyme catalyses a fatty acyl-[ACP] + phosphate = an acyl phosphate + holo-[ACP]. Its pathway is lipid metabolism; phospholipid metabolism. Catalyzes the reversible formation of acyl-phosphate (acyl-PO(4)) from acyl-[acyl-carrier-protein] (acyl-ACP). This enzyme utilizes acyl-ACP as fatty acyl donor, but not acyl-CoA. This is Phosphate acyltransferase from Shewanella woodyi (strain ATCC 51908 / MS32).